The primary structure comprises 332 residues: Ribosomal RNA small subunit methyltransferase C (332 aa).

This sequence belongs to the methyltransferase superfamily. RsmC family. As to quaternary structure, monomer.

It localises to the cytoplasm. It catalyses the reaction guanosine(1207) in 16S rRNA + S-adenosyl-L-methionine = N(2)-methylguanosine(1207) in 16S rRNA + S-adenosyl-L-homocysteine + H(+). Specifically methylates the guanine in position 1207 of 16S rRNA in the 30S particle. The polypeptide is Ribosomal RNA small subunit methyltransferase C (Pseudomonas paraeruginosa (strain DSM 24068 / PA7) (Pseudomonas aeruginosa (strain PA7))).